The sequence spans 556 residues: Interleukin-1 receptor-like 1 (556 aa).

Residues 1–18 (MGFWILAILTILMYSTAA) form the signal peptide. Ig-like C2-type domains lie at 19–103 (KFSK…ANVT) and 114–197 (PDYL…VTAT). Residues 19–328 (KFSKQSWGLE…SRKNPIDHHS (310 aa)) are Extracellular-facing. A disulfide bridge connects residues Cys-36 and Cys-87. Asn-54, Asn-95, Asn-101, Asn-140, and Asn-191 each carry an N-linked (GlcNAc...) asparagine glycan. 2 cysteine pairs are disulfide-bonded: Cys-111/Cys-151 and Cys-133/Cys-181. The tract at residues 198–211 (RSFTVKDEQGFSLF) is flexible linker. The Ig-like C2-type 3 domain occupies 212–319 (PVIGAPAQNE…GLRRHTVRLS (108 aa)). N-linked (GlcNAc...) asparagine glycosylation is found at Asn-232, Asn-254, and Asn-273. 2 disulfides stabilise this stretch: Cys-235–Cys-303 and Cys-238–Cys-282. A Glycyl lysine isopeptide (Lys-Gly) (interchain with G-Cter in ubiquitin) cross-link involves residue Lys-321. Residues 329-349 (IYCIIAVCSVFLMLINVLVII) form a helical membrane-spanning segment. Topologically, residues 350–556 (LKMFWIEATL…SLTPLAAQKQ (207 aa)) are cytoplasmic. The TIR domain maps to 375–535 (KLYDAYVVYP…KFWKHVRYQM (161 aa)). Glu-461 is an active-site residue.

Belongs to the interleukin-1 receptor family. Interacts with MYD88, IRAK1, IRAK4, and TRAF6. Bound to its ligand IL-33, interacts with IL1RAP to form the minimal interleukin-33 signaling complex with a 1:1:1 stoichiometry. Interacts with KIT (bound to KITLG/SCF). A mast cell-specific KITLG/SCF-induced interleukin-33 signaling complex contains IL1RL1, IL1RAP, KIT and MYD88. Interacts with TMED1. Post-translationally, ubiquitinated at Lys-321 in a FBXL19-mediated manner; leading to proteasomal degradation. Ubiquitination by TRAF6 via 'Lys-27'-linked polyubiquitination and deubiquitination by USP38 serves as a critical regulatory mechanism for fine-tuning IL1RL1-mediated inflammatory response. As to expression, highly expressed in kidney, lung, placenta, stomach, skeletal muscle, colon and small intestine. Isoform A is prevalently expressed in the lung, testis, placenta, stomach and colon. Isoform B is more abundant in the brain, kidney and the liver. Isoform C is not detected in brain, heart, liver, kidney and skeletal muscle. Expressed on T-cells in fibrotic liver; at protein level. Overexpressed in fibrotic and cirrhotic liver.

The protein localises to the cell membrane. It localises to the secreted. It carries out the reaction NAD(+) + H2O = ADP-D-ribose + nicotinamide + H(+). Receptor for interleukin-33 (IL-33) which plays crucial roles in innate and adaptive immunity, contributing to tissue homeostasis and responses to environmental stresses together with coreceptor IL1RAP. Its stimulation recruits MYD88, IRAK1, IRAK4, and TRAF6, followed by phosphorylation of MAPK3/ERK1 and/or MAPK1/ERK2, MAPK14, and MAPK8. Possibly involved in helper T-cell function. Upon tissue injury, induces UCP2-dependent mitochondrial rewiring that attenuates the generation of reactive oxygen species and preserves the integrity of Krebs cycle required for persistent production of itaconate and subsequent GATA3-dependent differentiation of inflammation-resolving alternatively activated macrophages. In terms of biological role, inhibits IL-33 signaling. In Homo sapiens (Human), this protein is Interleukin-1 receptor-like 1 (IL1RL1).